The chain runs to 333 residues: B3 domain-containing protein At1g32030 (333 aa).

Polar residues-rich tracts occupy residues 76–99 (VTVR…SLLD) and 134–143 (PQNASSSSTL). Positions 76-179 (VTVRNPEQNQ…SEPKKAKTPY (104 aa)) are disordered. A DNA-binding region (TF-B3) is located at residues 220–328 (QSRLLMPFNT…ILSFALVLPP (109 aa)).

It localises to the nucleus. The sequence is that of B3 domain-containing protein At1g32030 from Arabidopsis thaliana (Mouse-ear cress).